Here is a 207-residue protein sequence, read N- to C-terminus: ATP synthase subunit delta (207 aa).

It belongs to the ATPase delta chain family. In terms of assembly, F-type ATPases have 2 components, F(1) - the catalytic core - and F(0) - the membrane proton channel. F(1) has five subunits: alpha(3), beta(3), gamma(1), delta(1), epsilon(1). F(0) has three main subunits: a(1), b(2) and c(10-14). The alpha and beta chains form an alternating ring which encloses part of the gamma chain. F(1) is attached to F(0) by a central stalk formed by the gamma and epsilon chains, while a peripheral stalk is formed by the delta and b chains.

It localises to the cell inner membrane. In terms of biological role, f(1)F(0) ATP synthase produces ATP from ADP in the presence of a proton or sodium gradient. F-type ATPases consist of two structural domains, F(1) containing the extramembraneous catalytic core and F(0) containing the membrane proton channel, linked together by a central stalk and a peripheral stalk. During catalysis, ATP synthesis in the catalytic domain of F(1) is coupled via a rotary mechanism of the central stalk subunits to proton translocation. Functionally, this protein is part of the stalk that links CF(0) to CF(1). It either transmits conformational changes from CF(0) to CF(1) or is implicated in proton conduction. The polypeptide is ATP synthase subunit delta (Psychrobacter cryohalolentis (strain ATCC BAA-1226 / DSM 17306 / VKM B-2378 / K5)).